Reading from the N-terminus, the 429-residue chain is Adenylosuccinate synthetase (429 aa).

Residues 12 to 18 (GDEGKGK) and 40 to 42 (GHT) each bind GTP. The active-site Proton acceptor is the Asp-13. Residues Asp-13 and Gly-40 each contribute to the Mg(2+) site. Residues 13-16 (DEGK), 38-41 (NAGH), Thr-128, Arg-142, Gln-223, Thr-238, and Arg-302 contribute to the IMP site. The active-site Proton donor is His-41. Position 298–304 (298–304 (TTTGRPR)) interacts with substrate. Residues Arg-304, 330–332 (SID), and 412–414 (SVG) contribute to the GTP site.

This sequence belongs to the adenylosuccinate synthetase family. Homodimer. Requires Mg(2+) as cofactor.

Its subcellular location is the cytoplasm. The catalysed reaction is IMP + L-aspartate + GTP = N(6)-(1,2-dicarboxyethyl)-AMP + GDP + phosphate + 2 H(+). It participates in purine metabolism; AMP biosynthesis via de novo pathway; AMP from IMP: step 1/2. Functionally, plays an important role in the de novo pathway of purine nucleotide biosynthesis. Catalyzes the first committed step in the biosynthesis of AMP from IMP. The polypeptide is Adenylosuccinate synthetase (Bacillus cereus (strain ATCC 14579 / DSM 31 / CCUG 7414 / JCM 2152 / NBRC 15305 / NCIMB 9373 / NCTC 2599 / NRRL B-3711)).